The primary structure comprises 189 residues: Interferon alpha-12 (189 aa).

Residues 1 to 23 form the signal peptide; the sequence is MARLCAFLMTLLVMSYWSTCSLG. 2 disulfides stabilise this stretch: Cys-24–Cys-122 and Cys-52–Cys-162. N-linked (GlcNAc...) asparagine glycosylation occurs at Asn-101.

The protein belongs to the alpha/beta interferon family.

Its subcellular location is the secreted. Its function is as follows. Produced by macrophages, IFN-alpha have antiviral activities. Interferon stimulates the production of two enzymes: a protein kinase and an oligoadenylate synthetase. The sequence is that of Interferon alpha-12 (Ifna12) from Mus musculus (Mouse).